A 1416-amino-acid chain; its full sequence is Tiny macrocysts protein B (1416 aa).

Helical transmembrane passes span 47–67, 93–113, 140–160, 185–205, 231–251, 253–273, 285–305, and 315–335; these read ILTILSMLIEFCQLSSFGFKH, FGYLGFTILFWIAVGLLILGF, FVSFSVAVLFIPIISLLLIGL, ANLPIAVISIILIVVFSIVAF, VTVLFAKFVFAFFNSLVDFVP, LTSITFFVFMVILTFGSIIVL, SGFYTVVLWVSFMTLVTMGIN, and ITIVGVFFAFPIGFFSNMFYF. The segment covering 356–372 has biased composition (basic and acidic residues); sequence LKDANKKGKRNSVEKES. 2 disordered regions span residues 356-377 and 662-691; these read LKDANKKGKRNSVEKESSPTSK and IEKSGSKSGSSKSKDDSSESSSSSKGRRGK. Helical transmembrane passes span 706-726 and 953-973; these read WLMIGTTCCCIIFLIVVLVVF and AILYTWCGIFAVLFLICAVLF. Disordered stretches follow at residues 1018–1103 and 1119–1144; these read RDNL…RPLM and NVRLQAKDEEITNGGGERKGSDATRT. Over residues 1024–1039 the composition is skewed to acidic residues; the sequence is TTDDDGRDDHLGEDDN. 2 stretches are compositionally biased toward low complexity: residues 1048–1062 and 1083–1094; these read NNNNNNNNNNNNNNN and SSSGSNVLNTSS. The segment covering 1123-1144 has biased composition (basic and acidic residues); it reads QAKDEEITNGGGERKGSDATRT. 3 consecutive transmembrane segments (helical) span residues 1179 to 1199, 1325 to 1345, and 1358 to 1378; these read ILATFLLFGFITMGIWVTFTV, WFLALIDYIFIGLDTATFTYF, and VLTAILSVSCVILLVVHVVLF.

The protein resides in the membrane. Functionally, regulator of the cAMP signaling pathway specific to sexual development. Controls the levels of external cAMP by regulating the expression of phosphodiesterase pdsA and its inhibitor pdiA. This Dictyostelium discoideum (Social amoeba) protein is Tiny macrocysts protein B (tmcB).